The chain runs to 233 residues: Uracil-DNA glycosylase (233 aa).

The active-site Proton acceptor is Asp70.

This sequence belongs to the uracil-DNA glycosylase (UDG) superfamily. UNG family.

The protein localises to the cytoplasm. It catalyses the reaction Hydrolyzes single-stranded DNA or mismatched double-stranded DNA and polynucleotides, releasing free uracil.. Its function is as follows. Excises uracil residues from the DNA which can arise as a result of misincorporation of dUMP residues by DNA polymerase or due to deamination of cytosine. This Helicobacter pylori (strain P12) protein is Uracil-DNA glycosylase.